A 221-amino-acid chain; its full sequence is Translation initiation factor 6 (221 aa).

The protein belongs to the eIF-6 family.

Its function is as follows. Binds to the 50S ribosomal subunit and prevents its association with the 30S ribosomal subunit to form the 70S initiation complex. The protein is Translation initiation factor 6 of Natronomonas pharaonis (strain ATCC 35678 / DSM 2160 / CIP 103997 / JCM 8858 / NBRC 14720 / NCIMB 2260 / Gabara) (Halobacterium pharaonis).